The sequence spans 476 residues: Transposase for transposon Tn5 (476 aa).

The tract at residues 1-70 is interaction with DNA; it reads MITSALHRAA…YRFIRNPNVS (70 aa). 2 residues coordinate Mg(2+): aspartate 97 and aspartate 188. Interaction with DNA regions lie at residues 237-255 and 319-348; these read YQIS…KRKN and YTHR…EPDN. Residue glutamate 326 coordinates Mg(2+). Residues 369–476 are important for dimerization; that stretch reads SFTLPQALRA…KDLMAQGIKI (108 aa).

Belongs to the transposase 11 family. As to quaternary structure, monomer. Homodimer of tnp (isoform 1), and heterodimer of tnp (isoform 1) and inh (isoform 2). Requires Mg(2+) as cofactor.

Mediates transposition of transposon Tn5 by a 'cut and paste' mechanism. First, the monomeric transposase binds the 19 bp inverted DNA repeats flanking the transposon. Then, dimerization of the DNA-bound transposase creates a synaptic DNA complex. After nicking of the first DNA strand, excision of the transposon proceeds through a series of intermediates. The transposase then mediates the insertion of the transposon at a new site by strand transfer. The activity of the wild-type transposase is very low, and is further inhibited by dimerization with the transposase inhibitor (inh). This is Transposase for transposon Tn5 (tnpA) from Escherichia coli.